The sequence spans 553 residues: Putative transport protein YidE (553 aa).

The next 5 helical transmembrane spans lie at 4-24 (IALTVSILALVAVVGLFIGNV), 28-48 (GIGLGIGGVLFGGIIVGHFVS), 65-85 (FGLILFVYTIGIQVGPGFFAS), 95-115 (LFAVLIVIIGGLVTAILHKLF), and 158-178 (MSYAMAYPFGICGILFTMWML). RCK C-terminal domains lie at 191–276 (QQHE…VIGQ) and 279–361 (DTSL…VLGN). Transmembrane regions (helical) follow at residues 371–391 (MLPVFIGIGLGVLLGSIPVFV), 394–414 (FPAALKLGLAGGPLIMALILG), 439–459 (IVLFLSVVGLKSGGDFVNTLV), 464–484 (LSWIGYGALITAVPLITVGIL), and 533–553 (LVMFLRIITPQLLAVLFWSIG).

Belongs to the AAE transporter (TC 2.A.81) family. YidE subfamily.

Its subcellular location is the cell membrane. In Shigella dysenteriae serotype 1 (strain Sd197), this protein is Putative transport protein YidE.